A 213-amino-acid chain; its full sequence is Triosephosphate isomerase (213 aa).

7 to 9 is a substrate binding site; it reads NLK. Catalysis depends on histidine 88, which acts as the Electrophile. The active-site Proton acceptor is glutamate 136. 2 residues coordinate substrate: isoleucine 141 and glycine 174.

Belongs to the triosephosphate isomerase family. Homotetramer; dimer of dimers.

The protein localises to the cytoplasm. The enzyme catalyses D-glyceraldehyde 3-phosphate = dihydroxyacetone phosphate. It participates in carbohydrate biosynthesis; gluconeogenesis. Its pathway is carbohydrate degradation; glycolysis; D-glyceraldehyde 3-phosphate from glycerone phosphate: step 1/1. Functionally, involved in the gluconeogenesis. Catalyzes stereospecifically the conversion of dihydroxyacetone phosphate (DHAP) to D-glyceraldehyde-3-phosphate (G3P). The polypeptide is Triosephosphate isomerase (Thermoplasma volcanium (strain ATCC 51530 / DSM 4299 / JCM 9571 / NBRC 15438 / GSS1)).